Reading from the N-terminus, the 137-residue chain is Histone H2B.1, sperm (137 aa).

Residues 1–43 are disordered; that stretch reads MPSQKSPTKRSPTKRSPQKGGKGAKRGGKAGKRRRGVAVKRRR. 3 short sequence motifs (SPKK motif) span residues 6 to 9, 11 to 14, and 16 to 19; these read SPTK and SPQK. Basic residues predominate over residues 7 to 43; the sequence is PTKRSPTKRSPQKGGKGAKRGGKAGKRRRGVAVKRRR. 2 positions are modified to phosphoserine: Ser-11 and Ser-16. An O-linked (GlcNAc) serine glycan is attached at Ser-124. A Glycyl lysine isopeptide (Lys-Gly) (interchain with G-Cter in ubiquitin) cross-link involves residue Lys-132.

This sequence belongs to the histone H2B family. In terms of assembly, the nucleosome is a histone octamer containing two molecules each of H2A, H2B, H3 and H4 assembled in one H3-H4 heterotetramer and two H2A-H2B heterodimers. The octamer wraps approximately 147 bp of DNA. Post-translationally, monoubiquitination of Lys-132 gives a specific tag for epigenetic transcriptional activation and is also prerequisite for histone H3 'Lys-4' and 'Lys-79' methylation. Phosphorylated on SPKK motifs 2 and 3; which may regulate DNA binding. Dephosphorylated during maturation of spermatids to mature sperm and rephosphorylated at fertilization. In terms of processing, glcNAcylation at Ser-124 promotes monoubiquitination of Lys-132. It fluctuates in response to extracellular glucose, and associates with transcribed genes.

The protein localises to the nucleus. It is found in the chromosome. In terms of biological role, core component of nucleosome. Nucleosomes wrap and compact DNA into chromatin, limiting DNA accessibility to the cellular machineries which require DNA as a template. Histones thereby play a central role in transcription regulation, DNA repair, DNA replication and chromosomal stability. DNA accessibility is regulated via a complex set of post-translational modifications of histones, also called histone code, and nucleosome remodeling. The chain is Histone H2B.1, sperm from Psammechinus miliaris (Green sea urchin).